The sequence spans 571 residues: uncharacterized protein (571 aa).

Helical transmembrane passes span 10–29, 36–55, 65–87, 96–118, and 166–188; these read VRLHPELALFAAIVFGHFIG, VSLGTVVGTLIAGMILGLLF, WAFFDLFLFAVGYSAGPQFFASL, ALAVVVSCTGLAAAIAMVALFRF, and ATTYIFGEVGLILFVTVVAPRLL. In terms of domain architecture, RCK C-terminal spans 294-378; sequence TEVDDQELLS…IATAARNLGF (85 aa). The next 6 membrane-spanning stretches (helical) occupy residues 388–406, 411–433, 446–465, 480–502, 509–531, and 546–568; these read LVYLAGGVVVGILFGLLQV, VPLGLGTSGGVLVVGLVAGWLYS, LRLLSDVGLIVFIAAIGLAA, LFAKLVGAGVVVTLAGPIAGLLL, LPPVALLPGIAGAQTTVATLNAL, and VPFAVSNVLITLWGPVIVACAVA.

It belongs to the AAE transporter (TC 2.A.81) family.

The protein resides in the cell membrane. This is an uncharacterized protein from Bordetella parapertussis (strain 12822 / ATCC BAA-587 / NCTC 13253).